Here is a 92-residue protein sequence, read N- to C-terminus: Small ribosomal subunit protein uS19 (92 aa).

It belongs to the universal ribosomal protein uS19 family.

Functionally, protein S19 forms a complex with S13 that binds strongly to the 16S ribosomal RNA. The protein is Small ribosomal subunit protein uS19 of Clostridium botulinum (strain Eklund 17B / Type B).